Consider the following 355-residue polypeptide: Syntaxin-5 (355 aa).

Over Met-1 to Arg-333 the chain is Cytoplasmic. The IxM motif; signal for cargo packaging into COPII-coated vesicles motif lies at Ile-245–Met-247. The t-SNARE coiled-coil homology domain maps to Asp-263–Tyr-325. Positions Phe-287–Ala-318 form a coiled coil. A helical; Anchor for type IV membrane protein transmembrane segment spans residues Trp-334 to Leu-354. Residue Ala-355 is a topological domain, vesicular.

The protein belongs to the syntaxin family. In terms of assembly, part of a ternary complex containing STX5A, NSFL1C and VCP. Part of a unique SNARE complex composed of the Golgi SNAREs GOSR1, GOSR2, YKT6 and VTI1A. Component of a SNARE complex consisting of STX5, YKT6, GOSR1 and BET1L. Interacts with BET1L. Interacts with BET1. Interacts with COG4. Interacts with GM130/GOLGA2. Interacts (via IxM motif) with SEC24C and SEC24D; mediates STX5 packaging into COPII-coated vesicles. Interacts with VLDLR; this interaction mediates VLDLR translocation from the endoplasmic reticulum to the plasma membrane.

It localises to the endoplasmic reticulum-Golgi intermediate compartment membrane. The protein localises to the golgi apparatus membrane. Its function is as follows. Mediates endoplasmic reticulum to Golgi transport. Together with p115/USO1 and GM130/GOLGA2, involved in vesicle tethering and fusion at the cis-Golgi membrane to maintain the stacked and inter-connected structure of the Golgi apparatus. In terms of biological role, required for Golgi to endoplasmic reticulum retrogade transport, and for intra-Golgi transport. This Mus musculus (Mouse) protein is Syntaxin-5 (Stx5).